Here is a 101-residue protein sequence, read N- to C-terminus: Apolipoprotein C-II (101 aa).

Positions 1 to 22 (MGTRFLLALCLVLLVLGFEVQG) are cleaved as a signal peptide. Residues 66 to 74 (AVDEKLRDL) are lipid binding. Residues 78-101 (STAAMSTYTGIFTDQVLSVLKGEE) form a lipoprotein lipase cofactor region.

This sequence belongs to the apolipoprotein C2 family. Post-translationally, proapolipoprotein C-II is synthesized as a sialic acid containing glycoprotein which is subsequently desialylated prior to its proteolytic processing. Proapolipoprotein C-II, the major form found in plasma undergoes proteolytic cleavage of its N-terminal hexapeptide to generate apolipoprotein C-II, which occurs as the minor form in plasma.

It localises to the secreted. Its function is as follows. Component of chylomicrons, very low-density lipoproteins (VLDL), low-density lipoproteins (LDL), and high-density lipoproteins (HDL) in plasma. Plays an important role in lipoprotein metabolism as an activator of lipoprotein lipase. Both proapolipoprotein C-II and apolipoprotein C-II can activate lipoprotein lipase. In Macaca fascicularis (Crab-eating macaque), this protein is Apolipoprotein C-II (APOC2).